Here is a 199-residue protein sequence, read N- to C-terminus: Thymidylate kinase (199 aa).

ATP is bound at residue 7–14; that stretch reads GTEGVGKT.

This sequence belongs to the thymidylate kinase family.

The enzyme catalyses dTMP + ATP = dTDP + ADP. In terms of biological role, phosphorylation of dTMP to form dTDP in both de novo and salvage pathways of dTTP synthesis. This is Thymidylate kinase from Acinetobacter baumannii (strain AB307-0294).